The primary structure comprises 424 residues: Tyrosine--tRNA ligase (424 aa).

Tyr37 lines the L-tyrosine pocket. The 'HIGH' region motif lies at 42-51; sequence PTADSLHLGH. The L-tyrosine site is built by Tyr175 and Gln179. The short motif at 235-239 is the 'KMSKS' region element; sequence KFGKT. An ATP-binding site is contributed by Lys238. In terms of domain architecture, S4 RNA-binding spans 357–414; the sequence is ADLQQALVNAELVPSRGQARTMIGSNAVAINGEKQADPEYVFTDADRLFGRYTLLRRG.

The protein belongs to the class-I aminoacyl-tRNA synthetase family. TyrS type 1 subfamily. Homodimer.

It localises to the cytoplasm. The enzyme catalyses tRNA(Tyr) + L-tyrosine + ATP = L-tyrosyl-tRNA(Tyr) + AMP + diphosphate + H(+). Functionally, catalyzes the attachment of tyrosine to tRNA(Tyr) in a two-step reaction: tyrosine is first activated by ATP to form Tyr-AMP and then transferred to the acceptor end of tRNA(Tyr). This is Tyrosine--tRNA ligase from Yersinia pseudotuberculosis serotype O:1b (strain IP 31758).